The following is a 439-amino-acid chain: Enolase (439 aa).

The substrate site is built by His-157 and Glu-166. Glu-209 (proton donor) is an active-site residue. Mg(2+) contacts are provided by Asp-244, Glu-297, and Asp-324. Substrate is bound by residues Glu-297 and Asp-324. Lys-349 serves as the catalytic Proton acceptor. Residues 376-379 (SHRS) and Lys-400 each bind substrate.

Belongs to the enolase family. In terms of assembly, homodimer. It depends on Mg(2+) as a cofactor.

The protein localises to the cytoplasm. It catalyses the reaction (2R)-2-phosphoglycerate = phosphoenolpyruvate + H2O. The protein operates within carbohydrate degradation; glycolysis; pyruvate from D-glyceraldehyde 3-phosphate: step 4/5. The sequence is that of Enolase (ENOL) from Mastigamoeba balamuthi (Phreatamoeba balamuthi).